Here is a 230-residue protein sequence, read N- to C-terminus: Leucyl/phenylalanyl-tRNA--protein transferase (230 aa).

Belongs to the L/F-transferase family.

The protein resides in the cytoplasm. It catalyses the reaction N-terminal L-lysyl-[protein] + L-leucyl-tRNA(Leu) = N-terminal L-leucyl-L-lysyl-[protein] + tRNA(Leu) + H(+). The enzyme catalyses N-terminal L-arginyl-[protein] + L-leucyl-tRNA(Leu) = N-terminal L-leucyl-L-arginyl-[protein] + tRNA(Leu) + H(+). It carries out the reaction L-phenylalanyl-tRNA(Phe) + an N-terminal L-alpha-aminoacyl-[protein] = an N-terminal L-phenylalanyl-L-alpha-aminoacyl-[protein] + tRNA(Phe). Functions in the N-end rule pathway of protein degradation where it conjugates Leu, Phe and, less efficiently, Met from aminoacyl-tRNAs to the N-termini of proteins containing an N-terminal arginine or lysine. The chain is Leucyl/phenylalanyl-tRNA--protein transferase from Erwinia tasmaniensis (strain DSM 17950 / CFBP 7177 / CIP 109463 / NCPPB 4357 / Et1/99).